The following is a 524-amino-acid chain: MTSVPAGAISKRDNVVVFDTTMRDGEQSPGASMSLEEKLELAKILEEMGVDVIEAGFPIASNGDFEAVRQIAELITESTVCGLARAAAGDIDRCAEAVRRAKRGRIHTFISTSPVHMKYKLQMEPDAVLEAITRSVSHARNLVGDVEWSAEDATRTERDFLKRCVEAAIKAGATTINLPDTVGYSYPSEYGELFRDVITSVPGADKAIFSAHCHNDLGLAVANSIAAIEGGARQVEVAINGIGERAGNAALEEIVMALRVRGDHLPYGTSVDPVHITRASRYVSAITGFPVQFNKAIVGKNAFAHESGIHQDGMLKNAETYEIMKPEDVGQGATNLVMGKHSGRHAFREKLKALGYELGQNALNDAFGRFKELADKKKHVFDDDIVALVDDALARGSEKIRVSRLRVVAGTDGQSAELTLDIDGVASTAEATGDGPVDAVFNAIHKIVPHSAALRLFQVHAVTEGTDAQAQVSVRLEEDGRIATGAAADTDTLTASAKAYVNALNNLFARKEKSRPEAAIASGF.

The Pyruvate carboxyltransferase domain occupies 15 to 275 (VVVFDTTMRD…PYGTSVDPVH (261 aa)). Asp-24, His-212, His-214, and Asn-248 together coordinate Mn(2+). The regulatory domain stretch occupies residues 401 to 524 (RVSRLRVVAG…RPEAAIASGF (124 aa)).

This sequence belongs to the alpha-IPM synthase/homocitrate synthase family. LeuA type 1 subfamily. Homodimer. It depends on Mn(2+) as a cofactor.

It is found in the cytoplasm. The catalysed reaction is 3-methyl-2-oxobutanoate + acetyl-CoA + H2O = (2S)-2-isopropylmalate + CoA + H(+). Its pathway is amino-acid biosynthesis; L-leucine biosynthesis; L-leucine from 3-methyl-2-oxobutanoate: step 1/4. Functionally, catalyzes the condensation of the acetyl group of acetyl-CoA with 3-methyl-2-oxobutanoate (2-ketoisovalerate) to form 3-carboxy-3-hydroxy-4-methylpentanoate (2-isopropylmalate). In Caulobacter vibrioides (strain ATCC 19089 / CIP 103742 / CB 15) (Caulobacter crescentus), this protein is 2-isopropylmalate synthase.